The primary structure comprises 184 residues: Large ribosomal subunit protein uL15 (184 aa).

Residues 1 to 50 (MDLSSLRPAKGAVKNKKRVGRGQGSGNGTTAGKGNKGQQARSGYKRPINE) form a disordered region. Residues 21 to 35 (RGQGSGNGTTAGKGN) are compositionally biased toward gly residues.

This sequence belongs to the universal ribosomal protein uL15 family. In terms of assembly, part of the 50S ribosomal subunit.

Binds to the 23S rRNA. The polypeptide is Large ribosomal subunit protein uL15 (Chlorobium luteolum (strain DSM 273 / BCRC 81028 / 2530) (Pelodictyon luteolum)).